Consider the following 546-residue polypeptide: Probable protein kinase UbiB (546 aa).

One can recognise a Protein kinase domain in the interval 123 to 501 (DFDETPLASA…SRRQGQARYL (379 aa)). Residues 129–137 (LASASIAQV) and K152 contribute to the ATP site. The active-site Proton acceptor is D287. 2 consecutive transmembrane segments (helical) span residues 498 to 517 (ARYLLGVGASLLLAGVFLLT) and 522 to 541 (IEWGQISLAGAGLCWLLGWL).

This sequence belongs to the ABC1 family. UbiB subfamily.

It is found in the cell inner membrane. It functions in the pathway cofactor biosynthesis; ubiquinone biosynthesis [regulation]. Its function is as follows. Is probably a protein kinase regulator of UbiI activity which is involved in aerobic coenzyme Q (ubiquinone) biosynthesis. This Aeromonas hydrophila subsp. hydrophila (strain ATCC 7966 / DSM 30187 / BCRC 13018 / CCUG 14551 / JCM 1027 / KCTC 2358 / NCIMB 9240 / NCTC 8049) protein is Probable protein kinase UbiB.